The chain runs to 261 residues: Zinc finger protein 664 (261 aa).

9 consecutive C2H2-type zinc fingers follow at residues 3 to 25 (YKCP…QKVH), 31 to 53 (HKCD…WRDH), 59 to 81 (YKCD…KKIH), 87 to 109 (YKCY…MRVH), 115 to 137 (YVCS…QRVH), 143 to 165 (FKCE…QRVH), 171 to 193 (YKCY…QRVH), 199 to 221 (YRCC…QRVH), and 227 to 249 (FKCD…QRVH). Residue K257 forms a Glycyl lysine isopeptide (Lys-Gly) (interchain with G-Cter in SUMO2) linkage.

The protein belongs to the krueppel C2H2-type zinc-finger protein family. In terms of tissue distribution, expressed in the organ of Corti, stria vascularis, auditory nerve and retina. Lower levels in the tongue, cerebellum, small intestine and kidney.

Its subcellular location is the nucleus. In terms of biological role, may be involved in transcriptional regulation. The sequence is that of Zinc finger protein 664 (ZNF664) from Cavia porcellus (Guinea pig).